Consider the following 440-residue polypeptide: Chromosomal replication initiator protein DnaA (440 aa).

The segment at 1-74 is domain I, interacts with DnaA modulators; it reads MNPSQILENL…VQSGNKAIIN (74 aa). The segment at 74 to 99 is domain II; the sequence is NIQAQSAKQSNKSTKIDIAHIKAQST. Residues 100-316 are domain III, AAA+ region; that stretch reads ILNPSFTFDS…GIIISLNAYA (217 aa). Gly146, Gly148, Lys149, and Thr150 together coordinate ATP. Residues 317–440 are domain IV, binds dsDNA; that stretch reads TILGQEITLE…KNKILVKSQS (124 aa).

The protein belongs to the DnaA family. Oligomerizes as a right-handed, spiral filament on DNA at oriC.

It is found in the cytoplasm. Functionally, plays an essential role in the initiation and regulation of chromosomal replication. ATP-DnaA binds to the origin of replication (oriC) to initiate formation of the DNA replication initiation complex once per cell cycle. Binds the DnaA box (a 9 base pair repeat at the origin) and separates the double-stranded (ds)DNA. Forms a right-handed helical filament on oriC DNA; dsDNA binds to the exterior of the filament while single-stranded (ss)DNA is stabiized in the filament's interior. The ATP-DnaA-oriC complex binds and stabilizes one strand of the AT-rich DNA unwinding element (DUE), permitting loading of DNA polymerase. After initiation quickly degrades to an ADP-DnaA complex that is not apt for DNA replication. Binds acidic phospholipids. The chain is Chromosomal replication initiator protein DnaA from Campylobacter jejuni subsp. jejuni serotype O:23/36 (strain 81-176).